Here is a 433-residue protein sequence, read N- to C-terminus: GTPase Obg (433 aa).

The Obg domain maps to 1–159 (MAFRDVLDIE…RRVRLELRLI (159 aa)). Residues 160–327 (ADVGLVGYPN…LRQALFDLLP (168 aa)) form the OBG-type G domain. ATP contacts are provided by residues 166–173 (GYPNAGKS), 191–195 (FTTLS), 214–217 (DIPG), 280–283 (NKIE), and 308–310 (SAK). Mg(2+) is bound by residues Ser173 and Thr193. The OCT domain occupies 342 to 430 (PEEVREEPLT…IGSFRFEYYA (89 aa)).

The protein belongs to the TRAFAC class OBG-HflX-like GTPase superfamily. OBG GTPase family. In terms of assembly, monomer. Mg(2+) serves as cofactor.

It localises to the cytoplasm. In terms of biological role, an essential GTPase which binds GTP, GDP and possibly (p)ppGpp with moderate affinity, with high nucleotide exchange rates and a fairly low GTP hydrolysis rate. Plays a role in control of the cell cycle, stress response, ribosome biogenesis and in those bacteria that undergo differentiation, in morphogenesis control. This is GTPase Obg from Deinococcus geothermalis (strain DSM 11300 / CIP 105573 / AG-3a).